The sequence spans 376 residues: N-acetyldiaminopimelate deacetylase (376 aa).

Residue aspartate 69 is part of the active site. Catalysis depends on glutamate 128, which acts as the Proton acceptor.

This sequence belongs to the peptidase M20A family. N-acetyldiaminopimelate deacetylase subfamily.

It catalyses the reaction N-acetyl-(2S,6S)-2,6-diaminopimelate + H2O = (2S,6S)-2,6-diaminopimelate + acetate. Its pathway is amino-acid biosynthesis; L-lysine biosynthesis via DAP pathway; LL-2,6-diaminopimelate from (S)-tetrahydrodipicolinate (acetylase route): step 3/3. Catalyzes the conversion of N-acetyl-diaminopimelate to diaminopimelate and acetate. This is N-acetyldiaminopimelate deacetylase from Streptococcus pneumoniae serotype 4 (strain ATCC BAA-334 / TIGR4).